Consider the following 485-residue polypeptide: MFS-type transporter phm3 (485 aa).

The tract at residues 1–22 (MSLQDPTKEHNNTSPSPKDEKT) is disordered. Helical transmembrane passes span 55–75 (FTLY…LLVA), 83–103 (IVAS…PFLL), 113–133 (LWLY…CALS), 144–164 (FICG…IADL), 175–195 (ALFG…GGFV), 203–223 (WTFY…AVIM), 278–298 (PIVL…YLLF), 317–337 (GLAF…FAIL), 357–377 (LVLM…YGWS), 384–404 (WIVP…ILMP), 421–441 (ALAV…LAGP), and 449–469 (LGWG…VPFV).

Belongs to the major facilitator superfamily.

The protein resides in the cell membrane. Functionally, MFS-type transporter; part of the gene cluster that mediates the biosynthesis of the trans-fused decalin-containing tetramic acid phomasetin. The polypeptide is MFS-type transporter phm3 (Pyrenochaetopsis sp).